We begin with the raw amino-acid sequence, 261 residues long: Mannose-specific lectin 2 (261 aa).

An N-terminal signal peptide occupies residues 1 to 23 (MAKLLLFLLPAILGLLIPRSAVA). Bulb-type lectin domains are found at residues 26 to 131 (TNYL…PWVP) and 145 to 252 (DNLL…SKRS). Beta-D-mannose contacts are provided by residues 51–55 (QNDCN), tyrosine 59, tryptophan 63, glutamine 64, 170–174 (QGDCN), tyrosine 178, and 182–185 (YGWQ). Positions 51 to 59 (QNDCNLVLY) match the Carbohydrate-binding motif 1 motif. Cystine bridges form between cysteine 54/cysteine 74 and cysteine 173/cysteine 195. Residues 170 to 178 (QGDCNLVLY) carry the Carbohydrate-binding motif 2 motif.

Forms heterotetramer of 2 chains 1 and 2 chains 2 arranged as a dimer of chain 1 and chain 2 heterodimers.

In terms of biological role, mannose-specific lectin. Shows agglutinating activity towards erythrocytes from rabbit. This chain is Mannose-specific lectin 2, found in Colocasia esculenta (Wild taro).